The sequence spans 308 residues: Ornithine carbamoyltransferase (308 aa).

Residues 56 to 59 (STRT), Gln-83, Arg-107, and 134 to 137 (HPCQ) each bind carbamoyl phosphate. Residues Asn-165, Asp-225, and 229–230 (SM) contribute to the L-ornithine site. Carbamoyl phosphate contacts are provided by residues 266-267 (CL) and Arg-294.

Belongs to the aspartate/ornithine carbamoyltransferase superfamily. OTCase family.

The protein localises to the cytoplasm. It carries out the reaction carbamoyl phosphate + L-ornithine = L-citrulline + phosphate + H(+). It participates in amino-acid biosynthesis; L-arginine biosynthesis; L-arginine from L-ornithine and carbamoyl phosphate: step 1/3. Reversibly catalyzes the transfer of the carbamoyl group from carbamoyl phosphate (CP) to the N(epsilon) atom of ornithine (ORN) to produce L-citrulline. The polypeptide is Ornithine carbamoyltransferase (Ruegeria pomeroyi (strain ATCC 700808 / DSM 15171 / DSS-3) (Silicibacter pomeroyi)).